The sequence spans 211 residues: Pyridoxine/pyridoxamine 5'-phosphate oxidase (211 aa).

Substrate-binding positions include 7-10 (RREY) and lysine 65. FMN-binding positions include 60–65 (RIVLLK), 75–76 (YT), arginine 81, lysine 82, and glutamine 104. Substrate is bound by residues tyrosine 122, arginine 126, and serine 130. FMN contacts are provided by residues 139–140 (QS) and tryptophan 184. Substrate is bound at residue 190 to 192 (RLH). Arginine 194 provides a ligand contact to FMN.

It belongs to the pyridoxamine 5'-phosphate oxidase family. Homodimer. The cofactor is FMN.

The catalysed reaction is pyridoxamine 5'-phosphate + O2 + H2O = pyridoxal 5'-phosphate + H2O2 + NH4(+). The enzyme catalyses pyridoxine 5'-phosphate + O2 = pyridoxal 5'-phosphate + H2O2. It functions in the pathway cofactor metabolism; pyridoxal 5'-phosphate salvage; pyridoxal 5'-phosphate from pyridoxamine 5'-phosphate: step 1/1. Its pathway is cofactor metabolism; pyridoxal 5'-phosphate salvage; pyridoxal 5'-phosphate from pyridoxine 5'-phosphate: step 1/1. Functionally, catalyzes the oxidation of either pyridoxine 5'-phosphate (PNP) or pyridoxamine 5'-phosphate (PMP) into pyridoxal 5'-phosphate (PLP). The chain is Pyridoxine/pyridoxamine 5'-phosphate oxidase from Vibrio cholerae serotype O1 (strain ATCC 39315 / El Tor Inaba N16961).